Here is a 529-residue protein sequence, read N- to C-terminus: Probable DNA helicase MPN_340 (529 aa).

In terms of domain architecture, UvrD-like helicase ATP-binding spans 2–285 (EHLNQEQKAA…FYTTQNYRSI (284 aa)). 23 to 30 (SGAGTGKT) is an ATP binding site.

It belongs to the helicase family. UvrD subfamily.

It carries out the reaction Couples ATP hydrolysis with the unwinding of duplex DNA by translocating in the 3'-5' direction.. The catalysed reaction is ATP + H2O = ADP + phosphate + H(+). In Mycoplasma pneumoniae (strain ATCC 29342 / M129 / Subtype 1) (Mycoplasmoides pneumoniae), this protein is Probable DNA helicase MPN_340.